We begin with the raw amino-acid sequence, 209 residues long: Large ribosomal subunit protein uL3 (209 aa).

The interval 127-151 (SGGPSSHGSKFHRHLGGTGQATTPA) is disordered.

It belongs to the universal ribosomal protein uL3 family. In terms of assembly, part of the 50S ribosomal subunit. Forms a cluster with proteins L14 and L19.

One of the primary rRNA binding proteins, it binds directly near the 3'-end of the 23S rRNA, where it nucleates assembly of the 50S subunit. This chain is Large ribosomal subunit protein uL3, found in Borrelia turicatae (strain 91E135).